We begin with the raw amino-acid sequence, 125 residues long: Large ribosomal subunit protein bL12 (125 aa).

Belongs to the bacterial ribosomal protein bL12 family. As to quaternary structure, homodimer. Part of the ribosomal stalk of the 50S ribosomal subunit. Forms a multimeric L10(L12)X complex, where L10 forms an elongated spine to which 2 to 4 L12 dimers bind in a sequential fashion. Binds GTP-bound translation factors.

Its function is as follows. Forms part of the ribosomal stalk which helps the ribosome interact with GTP-bound translation factors. Is thus essential for accurate translation. This is Large ribosomal subunit protein bL12 from Ruegeria sp. (strain TM1040) (Silicibacter sp.).